We begin with the raw amino-acid sequence, 101 residues long: Small ribosomal subunit protein uS14 (101 aa).

The tract at residues 51–70 (LPRDSSPSRQRNRCSQTGRP) is disordered. Over residues 52–68 (PRDSSPSRQRNRCSQTG) the composition is skewed to polar residues.

Belongs to the universal ribosomal protein uS14 family. In terms of assembly, part of the 30S ribosomal subunit. Contacts proteins S3 and S10.

In terms of biological role, binds 16S rRNA, required for the assembly of 30S particles and may also be responsible for determining the conformation of the 16S rRNA at the A site. This Mannheimia succiniciproducens (strain KCTC 0769BP / MBEL55E) protein is Small ribosomal subunit protein uS14.